The sequence spans 198 residues: MIEFVYPHTQLVAGVDEVGRGPLVGAVVTAAVILDPARPIAGLNDSKKLSEKRRLALCEEIKEKALSWSLGRAEPHEIDELNILHATMLAMQRAVAGLHIAPEYVLIDGNRCPKLPMPSMAVVKGDSRVPEISAASILAKVTRDAEMAALDIVFPQYGFAQHKGYPTAFHLEKLAEYGATEHHRRSFGPVKRALGLAS.

The RNase H type-2 domain occupies 10–198 (QLVAGVDEVG…PVKRALGLAS (189 aa)). Residues D16, E17, and D108 each coordinate a divalent metal cation.

The protein belongs to the RNase HII family. It depends on Mn(2+) as a cofactor. Mg(2+) is required as a cofactor.

The protein resides in the cytoplasm. The enzyme catalyses Endonucleolytic cleavage to 5'-phosphomonoester.. Its function is as follows. Endonuclease that specifically degrades the RNA of RNA-DNA hybrids. The sequence is that of Ribonuclease HII from Escherichia coli O6:H1 (strain CFT073 / ATCC 700928 / UPEC).